Reading from the N-terminus, the 326-residue chain is Probable cell division protein WhiA (326 aa).

The segment at residues 275–308 (SLDELGRLADPPMTKDAIAGRIRRLLAMADKRAS) is a DNA-binding region (H-T-H motif).

Belongs to the WhiA family.

Functionally, involved in cell division and chromosome segregation. The polypeptide is Probable cell division protein WhiA (Renibacterium salmoninarum (strain ATCC 33209 / DSM 20767 / JCM 11484 / NBRC 15589 / NCIMB 2235)).